The chain runs to 344 residues: Holliday junction branch migration complex subunit RuvB (344 aa).

Positions 1-180 (MSRIVSGEAQ…FGIPVRLEFY (180 aa)) are large ATPase domain (RuvB-L). Leu-19, Arg-20, Gly-61, Lys-64, Thr-65, Thr-66, Arg-170, Tyr-180, and Arg-217 together coordinate ATP. Thr-65 contributes to the Mg(2+) binding site. Residues 181–251 (THDELARVLL…AAAAALARLD (71 aa)) form a small ATPAse domain (RuvB-S) region. Residues 254–344 (EVGLDALDRR…AAPPADLFDK (91 aa)) form a head domain (RuvB-H) region. The DNA site is built by Arg-290, Arg-309, and Arg-314.

The protein belongs to the RuvB family. Homohexamer. Forms an RuvA(8)-RuvB(12)-Holliday junction (HJ) complex. HJ DNA is sandwiched between 2 RuvA tetramers; dsDNA enters through RuvA and exits via RuvB. An RuvB hexamer assembles on each DNA strand where it exits the tetramer. Each RuvB hexamer is contacted by two RuvA subunits (via domain III) on 2 adjacent RuvB subunits; this complex drives branch migration. In the full resolvosome a probable DNA-RuvA(4)-RuvB(12)-RuvC(2) complex forms which resolves the HJ.

The protein resides in the cytoplasm. The enzyme catalyses ATP + H2O = ADP + phosphate + H(+). The RuvA-RuvB-RuvC complex processes Holliday junction (HJ) DNA during genetic recombination and DNA repair, while the RuvA-RuvB complex plays an important role in the rescue of blocked DNA replication forks via replication fork reversal (RFR). RuvA specifically binds to HJ cruciform DNA, conferring on it an open structure. The RuvB hexamer acts as an ATP-dependent pump, pulling dsDNA into and through the RuvAB complex. RuvB forms 2 homohexamers on either side of HJ DNA bound by 1 or 2 RuvA tetramers; 4 subunits per hexamer contact DNA at a time. Coordinated motions by a converter formed by DNA-disengaged RuvB subunits stimulates ATP hydrolysis and nucleotide exchange. Immobilization of the converter enables RuvB to convert the ATP-contained energy into a lever motion, pulling 2 nucleotides of DNA out of the RuvA tetramer per ATP hydrolyzed, thus driving DNA branch migration. The RuvB motors rotate together with the DNA substrate, which together with the progressing nucleotide cycle form the mechanistic basis for DNA recombination by continuous HJ branch migration. Branch migration allows RuvC to scan DNA until it finds its consensus sequence, where it cleaves and resolves cruciform DNA. The chain is Holliday junction branch migration complex subunit RuvB from Phenylobacterium zucineum (strain HLK1).